The primary structure comprises 162 residues: NADH-quinone oxidoreductase subunit I (162 aa).

4Fe-4S ferredoxin-type domains are found at residues leucine 53–glutamate 83 and threonine 93–asparagine 122. The [4Fe-4S] cluster site is built by cysteine 63, cysteine 66, cysteine 69, cysteine 73, cysteine 102, cysteine 105, cysteine 108, and cysteine 112.

Belongs to the complex I 23 kDa subunit family. NDH-1 is composed of 14 different subunits. Subunits NuoA, H, J, K, L, M, N constitute the membrane sector of the complex. It depends on [4Fe-4S] cluster as a cofactor.

The protein localises to the cell inner membrane. The enzyme catalyses a quinone + NADH + 5 H(+)(in) = a quinol + NAD(+) + 4 H(+)(out). Its function is as follows. NDH-1 shuttles electrons from NADH, via FMN and iron-sulfur (Fe-S) centers, to quinones in the respiratory chain. The immediate electron acceptor for the enzyme in this species is believed to be ubiquinone. Couples the redox reaction to proton translocation (for every two electrons transferred, four hydrogen ions are translocated across the cytoplasmic membrane), and thus conserves the redox energy in a proton gradient. This Rhodospirillum rubrum (strain ATCC 11170 / ATH 1.1.1 / DSM 467 / LMG 4362 / NCIMB 8255 / S1) protein is NADH-quinone oxidoreductase subunit I.